Here is a 162-residue protein sequence, read N- to C-terminus: MNLRIGQGWDVHRLVEGRPLVLGGVTIPFDKGLDGHSDADALCHAITDALFGAAALGDIGRHFPDTDLEFKGADSRVLLREAVRRVREAGFDIVNVDSTVIAQAPRLAPYVEAMRSHLAADLGLSPDRVNVKAKTSERLGHLGRGEGIAADAVCLLQSRLQE.

A divalent metal cation is bound by residues Asp10 and His12. Residues 10 to 12 and 36 to 37 each bind 4-CDP-2-C-methyl-D-erythritol 2-phosphate; these read DVH and HS. Position 44 (His44) interacts with a divalent metal cation. Residues 58-60, 63-67, and Arg144 contribute to the 4-CDP-2-C-methyl-D-erythritol 2-phosphate site; these read DIG and FPDTD.

The protein belongs to the IspF family. As to quaternary structure, homotrimer. It depends on a divalent metal cation as a cofactor.

It catalyses the reaction 4-CDP-2-C-methyl-D-erythritol 2-phosphate = 2-C-methyl-D-erythritol 2,4-cyclic diphosphate + CMP. Its pathway is isoprenoid biosynthesis; isopentenyl diphosphate biosynthesis via DXP pathway; isopentenyl diphosphate from 1-deoxy-D-xylulose 5-phosphate: step 4/6. Involved in the biosynthesis of isopentenyl diphosphate (IPP) and dimethylallyl diphosphate (DMAPP), two major building blocks of isoprenoid compounds. Catalyzes the conversion of 4-diphosphocytidyl-2-C-methyl-D-erythritol 2-phosphate (CDP-ME2P) to 2-C-methyl-D-erythritol 2,4-cyclodiphosphate (ME-CPP) with a corresponding release of cytidine 5-monophosphate (CMP). In Laribacter hongkongensis (strain HLHK9), this protein is 2-C-methyl-D-erythritol 2,4-cyclodiphosphate synthase.